The following is a 233-amino-acid chain: Preflagellin peptidase (233 aa).

Residue M1 is a topological domain, cytoplasmic. Residues 2 to 18 traverse the membrane as a helical segment; sequence IAYAIGLLGLLIASIQD. Residues 19-23 lie on the Extracellular side of the membrane; the sequence is IKSRE. A helical membrane pass occupies residues 24 to 46; sequence IENYIWIGMAVIGLLLSTYLSFT. Residues 47–49 are Cytoplasmic-facing; that stretch reads TGN. A helical membrane pass occupies residues 50–72; the sequence is FMPIISSISGFIICFIIGYLMFV. At 73–78 the chain is on the extracellular side; sequence LGIGGA. A helical transmembrane segment spans residues 79 to 89; the sequence is DGKILMGMGAL. Topologically, residues 90–110 are cytoplasmic; it reads IPSYAFPVYSSLQPLYTMEYI. The helical transmembrane segment at 111–139 threads the bilayer; sequence PWFPLLVFFNGVILMIVLPIYLFFKNLSN. Over 140-207 the chain is Extracellular; sequence GVKPKKLKEY…QYVWATPELP (68 aa). Residues 208–219 form a helical membrane-spanning segment; it reads LLVPIALSYIIT. The Cytoplasmic portion of the chain corresponds to 220 to 233; sequence PFLGDKILSIILPM.

This sequence belongs to the peptidase A24 family. Archaeal preflagellin peptidase subfamily.

The protein resides in the cell membrane. It carries out the reaction Cleaves the signal peptide of 3 to 12 amino acids from the N-terminal of preflagellin, usually at Arg-Gly-|- or Lys-Gly-|-, to release flagellin.. In terms of biological role, cleaves the N-terminal leader peptide from preflagellins. The processing of preflagellins is necessary for assembly of flagellins into a flagellum structure. This Methanococcus voltae protein is Preflagellin peptidase (flaK).